A 133-amino-acid chain; its full sequence is Profilin-3 (133 aa).

It belongs to the profilin family. Occurs in many kinds of cells as a complex with monomeric actin in a 1:1 ratio.

The protein resides in the cytoplasm. It localises to the cytoskeleton. Its function is as follows. Binds to actin and affects the structure of the cytoskeleton. At high concentrations, profilin prevents the polymerization of actin, whereas it enhances it at low concentrations. By binding to PIP2, it inhibits the formation of IP3 and DG. This chain is Profilin-3, found in Ambrosia artemisiifolia (Common ragweed).